Reading from the N-terminus, the 144-residue chain is Universal stress protein A homolog 1 (144 aa).

This sequence belongs to the universal stress protein A family. As to quaternary structure, homodimer.

The protein localises to the cytoplasm. In terms of biological role, involved in stress response. In Coxiella burnetii (strain RSA 493 / Nine Mile phase I), this protein is Universal stress protein A homolog 1 (uspA1).